We begin with the raw amino-acid sequence, 705 residues long: MPLRNVMAENNFKMLKIQQCVANKLPRNRPYICNICFKHFETPSKLARHYLIHTGQKPFECDVCHKNFRQLVHLERHQLTHNLPFSCNICQRHFKNLKTFVKHQQLHNESYHNDVKVRRLLETKQEKPVYGMCNTFTADERWALHPCSKSDATYSTTKRRKNIHACTICGKMFPSQSKLDRHSLIHTGQRPFKCVLCSKSFRQSTHLKIHQLTHSEERPFQCCFCQKGFKIQSKLLKHKQIHTRNKTLQNLPLKVKSPESCPLPNKLNAKQDAFESGDMGESEENNPLDVHSIYIVPFQCSECEECFESEQILNGHKCLPARGGRVPSRLKRSCNYKTIVKKLLAKLKRAGGKKSDDLQSEKKRTFKSNYLKNCERSSGKPNIEQTQRTFVGSLSRHGSYKTVSKKKKKTLALPFSWQKQFQSQNTGKSLQGILTTGSILSMDGSVNNKDLSIYGSSGEEYLNCDMLQCGFSDSSENIHTGHKMCPCDKCDKVFPSISKLQRHYLIHTGQRPFDCNVCGKSFRQSAHLKRHKLTHIEKIPYSSFWRVDFGNVNQLFIHPSDDVSYNASQQCEGLGSQSCESSESSQVSEIEVKVEPEDFLLGSHCRSRQSYLANALVESEQSHHCYSYLGRPERSDGLLYQCSVCCKHFRSPSKLERHYLIHAGQKPFECSVCGKTFRQAPHWKRHQLTHFKERPQEKVVLDSTV.

Lys-16 is covalently cross-linked (Glycyl lysine isopeptide (Lys-Gly) (interchain with G-Cter in SUMO2)). C2H2-type zinc fingers lie at residues 31–53 (YICNICFKHFETPSKLARHYLIH), 59–81 (FECDVCHKNFRQLVHLERHQLTH), and 85–107 (FSCNICQRHFKNLKTFVKHQQLH). Glycyl lysine isopeptide (Lys-Gly) (interchain with G-Cter in SUMO2) cross-links involve residues Lys-116, Lys-124, and Lys-149. C2H2-type zinc fingers lie at residues 164 to 186 (HACTICGKMFPSQSKLDRHSLIH), 192 to 214 (FKCVLCSKSFRQSTHLKIHQLTH), and 220 to 242 (FQCCFCQKGFKIQSKLLKHKQIH). Residue Lys-266 forms a Glycyl lysine isopeptide (Lys-Gly) (interchain with G-Cter in SUMO2) linkage. A C2H2-type 7; degenerate zinc finger spans residues 298–322 (FQCSECEECFESEQILNGHKCLPAR). C2H2-type zinc fingers lie at residues 485–507 (CPCDKCDKVFPSISKLQRHYLIH), 513–535 (FDCNVCGKSFRQSAHLKRHKLTH), 640–662 (YQCSVCCKHFRSPSKLERHYLIH), and 668–690 (FECSVCGKTFRQAPHWKRHQLTH). Lys-698 is covalently cross-linked (Glycyl lysine isopeptide (Lys-Gly) (interchain with G-Cter in SUMO2)).

It belongs to the krueppel C2H2-type zinc-finger protein family.

The protein resides in the nucleus. Its function is as follows. May be involved in transcriptional regulation. The polypeptide is Zinc finger protein 770 (Znf770) (Mus musculus (Mouse)).